The following is a 784-amino-acid chain: E3 UFM1-protein ligase 1 homolog (784 aa).

The segment covering Q398–E414 has biased composition (basic and acidic residues). Residues Q398–P472 are disordered.

Belongs to the UFL1 family.

Its function is as follows. E3 UFM1-protein ligase that mediates ufmylation of target proteins. The protein is E3 UFM1-protein ligase 1 homolog of Anopheles gambiae (African malaria mosquito).